We begin with the raw amino-acid sequence, 704 residues long: Glycogen [starch] synthase, liver (704 aa).

Ser-8 is modified (phosphoserine; by AMPK and PKA). Phosphoserine is present on Ser-11. Position 40 (Lys-40) interacts with UDP. 2 residues coordinate UDP-alpha-D-glucose: His-205 and Arg-211. His-291, Glu-292, Gln-294, His-297, and Lys-301 together coordinate alpha-D-glucose 6-phosphate. Arg-331 serves as a coordination point for UDP. Arg-331 serves as a coordination point for UDP-alpha-D-glucose. His-501 serves as a coordination point for alpha-D-glucose 6-phosphate. Residues Glu-510, Trp-512, and Gly-513 each coordinate UDP-alpha-D-glucose. Thr-515 contacts UDP. Alpha-D-glucose 6-phosphate is bound by residues Arg-582 and Arg-586. Residues 620–704 (KFHLEPTSPP…KKKLHGEYKN (85 aa)) form a disordered region. Ser-627 bears the Phosphoserine mark. Residues Ser-641, Ser-645, Ser-649, and Ser-653 each carry the phosphoserine; by GSK3-alpha and GSK3-beta modification. The span at 647–657 (SGSQASSPQCS) shows a compositional bias: low complexity. Ser-657 carries the phosphoserine; by CK2 modification. A compositionally biased stretch (acidic residues) spans 658–675 (DAEDEEDEDERYDEEEEA). At Ser-684 the chain carries Phosphoserine.

Belongs to the glycosyltransferase 3 family. As to quaternary structure, part of the glycogen synthase (GS)-glycogenin complex, a heterooctamer composed of a tetramer of GS and 2 dimers of glycogenin, where each GS protomer binds to one glycogenin subunit (via glycogenin C-terminus); the GS tetramer may dissociate from glycogenin dimers to continue glycogen polymerization on its own. May also form a heterooctamer complex with GYG1 (via GYG1 C-terminus). Post-translationally, phosphorylation reduces the activity towards UDP-alpha-D-glucose. Primed phosphorylation at Ser-657 (site 5) by CSNK2A1 and CSNK2A2 is required for inhibitory phosphorylation at Ser-641 (site 3a), Ser-645 (site 3b), Ser-649 (site 3c) and Ser-653 (site 4) by GSK3A an GSK3B. Dephosphorylation at Ser-641 and Ser-645 by PP1 activates the enzyme. Phosphorylation at Ser-8 is not required for interaction with GYG1. Interaction with GYG1 does not regulate the phosphorylation at Ser-8 and Ser-641. Specifically expressed in liver.

The catalysed reaction is [(1-&gt;4)-alpha-D-glucosyl](n) + UDP-alpha-D-glucose = [(1-&gt;4)-alpha-D-glucosyl](n+1) + UDP + H(+). It participates in glycan biosynthesis; glycogen biosynthesis. Its activity is regulated as follows. Allosteric activation by glucose-6-phosphate. Phosphorylation reduces the activity towards UDP-glucose. When in the non-phosphorylated state, glycogen synthase does not require glucose-6-phosphate as an allosteric activator; when phosphorylated it does. Functionally, glycogen synthase participates in the glycogen biosynthetic process along with glycogenin and glycogen branching enzyme. Extends the primer composed of a few glucose units formed by glycogenin by adding new glucose units to it. In this context, glycogen synthase transfers the glycosyl residue from UDP-Glc to the non-reducing end of alpha-1,4-glucan. The chain is Glycogen [starch] synthase, liver from Mus musculus (Mouse).